The sequence spans 427 residues: Adenylosuccinate synthetase (427 aa).

Residues 12 to 18 (GDEGKGK) and 40 to 42 (GHT) contribute to the GTP site. The active-site Proton acceptor is aspartate 13. Mg(2+) is bound by residues aspartate 13 and glycine 40. Residues 13–16 (DEGK), 38–41 (NAGH), threonine 126, arginine 140, glutamine 221, threonine 236, and arginine 299 each bind IMP. The active-site Proton donor is histidine 41. 295–301 (STTKRPR) lines the substrate pocket. GTP contacts are provided by residues arginine 301, 327–329 (KLD), and 409–411 (SVG).

This sequence belongs to the adenylosuccinate synthetase family. In terms of assembly, homodimer. Requires Mg(2+) as cofactor.

It localises to the cytoplasm. The enzyme catalyses IMP + L-aspartate + GTP = N(6)-(1,2-dicarboxyethyl)-AMP + GDP + phosphate + 2 H(+). It functions in the pathway purine metabolism; AMP biosynthesis via de novo pathway; AMP from IMP: step 1/2. In terms of biological role, plays an important role in the de novo pathway of purine nucleotide biosynthesis. Catalyzes the first committed step in the biosynthesis of AMP from IMP. This Borrelia duttonii (strain Ly) protein is Adenylosuccinate synthetase.